We begin with the raw amino-acid sequence, 399 residues long: Tyrosine--tRNA ligase (399 aa).

A 'HIGH' region motif is present at residues 42–51 (PTAPDLHLGH). The 'KMSKS' region signature appears at 226–230 (KMSKS). Lysine 229 contributes to the ATP binding site. An S4 RNA-binding domain is found at 336 to 396 (MPIAAVLNKA…GKKAFARITL (61 aa)).

The protein belongs to the class-I aminoacyl-tRNA synthetase family. TyrS type 2 subfamily. As to quaternary structure, homodimer.

The protein localises to the cytoplasm. It catalyses the reaction tRNA(Tyr) + L-tyrosine + ATP = L-tyrosyl-tRNA(Tyr) + AMP + diphosphate + H(+). Functionally, catalyzes the attachment of tyrosine to tRNA(Tyr) in a two-step reaction: tyrosine is first activated by ATP to form Tyr-AMP and then transferred to the acceptor end of tRNA(Tyr). The polypeptide is Tyrosine--tRNA ligase (Pseudomonas fluorescens (strain Pf0-1)).